A 365-amino-acid polypeptide reads, in one-letter code: MKKIFNFSAGPSMLPKQVLNQIQQELYDWNNLGISIMEISHRSLEFMELVHDTKRNLRNLLNIPNSYEILFCHGGARAQFSAIPMNFLRGSADNIDYINTGYWGYLAAIESKKYCHPNIINISSSKNELRYIKPMSEWNISKNSTYIHYCPNETVEGISIDDIPDCFEKKIVIADFSSTLLSRPVNVNNFGMIYAAAQKNMGISGLTVLIIRRSLINNISTVQKIPAILNYRILADSNSMFNTPVTVSWYIANLVFKWLQDQGGLDKIAEYNKKKSNLLYHAIDSNDFYYNNIHSLNRSRMNIPFFLKKEKLNSLFLSESTSFGLHGLKGHKVIGGMRASLYNAMTLEGVQKLVNFMNFFSKKYG.

Arginine 42 contributes to the L-glutamate binding site. Pyridoxal 5'-phosphate is bound by residues 76-77, tryptophan 103, threonine 154, aspartate 175, and glutamine 198; that span reads AR. At lysine 199 the chain carries N6-(pyridoxal phosphate)lysine. 242–243 serves as a coordination point for pyridoxal 5'-phosphate; it reads NT.

The protein belongs to the class-V pyridoxal-phosphate-dependent aminotransferase family. SerC subfamily. As to quaternary structure, homodimer. Pyridoxal 5'-phosphate serves as cofactor.

The protein resides in the cytoplasm. It catalyses the reaction O-phospho-L-serine + 2-oxoglutarate = 3-phosphooxypyruvate + L-glutamate. It carries out the reaction 4-(phosphooxy)-L-threonine + 2-oxoglutarate = (R)-3-hydroxy-2-oxo-4-phosphooxybutanoate + L-glutamate. It functions in the pathway amino-acid biosynthesis; L-serine biosynthesis; L-serine from 3-phospho-D-glycerate: step 2/3. It participates in cofactor biosynthesis; pyridoxine 5'-phosphate biosynthesis; pyridoxine 5'-phosphate from D-erythrose 4-phosphate: step 3/5. Functionally, catalyzes the reversible conversion of 3-phosphohydroxypyruvate to phosphoserine and of 3-hydroxy-2-oxo-4-phosphonooxybutanoate to phosphohydroxythreonine. The chain is Phosphoserine aminotransferase from Blochmanniella floridana.